Here is a 449-residue protein sequence, read N- to C-terminus: 5'-deoxyadenosine deaminase (449 aa).

Positions 79 and 81 each coordinate Zn(2+). Residues Glu-108 and His-200 each contribute to the substrate site. His-227 is a binding site for Zn(2+). The substrate site is built by Glu-230 and Asp-316. Asp-316 serves as a coordination point for Zn(2+).

This sequence belongs to the metallo-dependent hydrolases superfamily. MTA/SAH deaminase family. As to quaternary structure, homotetramer. Zn(2+) is required as a cofactor.

It carries out the reaction 5'-deoxyadenosine + H2O + H(+) = 5'-deoxyinosine + NH4(+). The enzyme catalyses S-adenosyl-L-homocysteine + H2O + H(+) = S-inosyl-L-homocysteine + NH4(+). It catalyses the reaction S-methyl-5'-thioadenosine + H2O + H(+) = S-methyl-5'-thioinosine + NH4(+). The catalysed reaction is adenosine + H2O + H(+) = inosine + NH4(+). It functions in the pathway amino-acid biosynthesis; S-adenosyl-L-methionine biosynthesis. In terms of biological role, catalyzes the deamination of three SAM-derived enzymatic products, namely 5'-deoxyadenosine, S-adenosyl-L-homocysteine, and 5'-methylthioadenosine, to produce the inosine analogs. Can also deaminate adenosine. The preferred substrate for this enzyme is 5'-deoxyadenosine, but all these substrates are efficiently deaminated. Likely functions in a S-adenosyl-L-methionine (SAM) recycling pathway from S-adenosyl-L-homocysteine (SAH) produced from SAM-dependent methylation reactions. May also be involved in the recycling of 5'-deoxyadenosine, whereupon the 5'-deoxyribose moiety of 5'-deoxyinosine is further metabolized to deoxyhexoses used for the biosynthesis of aromatic amino acids in methanogens. This chain is 5'-deoxyadenosine deaminase, found in Methanospirillum hungatei JF-1 (strain ATCC 27890 / DSM 864 / NBRC 100397 / JF-1).